Here is a 77-residue protein sequence, read N- to C-terminus: Acyl carrier protein (77 aa).

The Carrier domain occupies Ser-2 to Ser-77. Position 37 is an O-(pantetheine 4'-phosphoryl)serine (Ser-37).

This sequence belongs to the acyl carrier protein (ACP) family. 4'-phosphopantetheine is transferred from CoA to a specific serine of apo-ACP by AcpS. This modification is essential for activity because fatty acids are bound in thioester linkage to the sulfhydryl of the prosthetic group.

It localises to the cytoplasm. The protein operates within lipid metabolism; fatty acid biosynthesis. Carrier of the growing fatty acid chain in fatty acid biosynthesis. The polypeptide is Acyl carrier protein (Alcanivorax borkumensis (strain ATCC 700651 / DSM 11573 / NCIMB 13689 / SK2)).